The following is a 300-amino-acid chain: Transcription initiation factor IIB (300 aa).

The segment at 2–34 (NKQKVCPACESAELIYDPERGEIVCAKCGYVIE) adopts a TFIIB-type zinc-finger fold. Zn(2+) contacts are provided by C7, C10, C26, and C29. 2 consecutive repeat copies span residues 114–197 (SELD…ARNL) and 210–291 (DYVN…ELVE).

It belongs to the TFIIB family.

Its function is as follows. Stabilizes TBP binding to an archaeal box-A promoter. Also responsible for recruiting RNA polymerase II to the pre-initiation complex (DNA-TBP-TFIIB). The sequence is that of Transcription initiation factor IIB from Pyrococcus furiosus (strain ATCC 43587 / DSM 3638 / JCM 8422 / Vc1).